Consider the following 207-residue polypeptide: MGKGDPNKPRGKMSSYAYFVQTCREEHKKKHPDSSVNFAEFSRKCSERWKTMSSKEKGKFEEMAKGDKARYDREMKNYVPPKGEKKGKKKDPNAPKRPPSAFFLFCSEHRPKIKNDHPGLSIGDTAKKLGEMWSEQLAKDKQPYEQKAAKLKEKYEKDIAAYRAKSKSDAGKKGPGRPAGSKKKAEPEEEEEEEEDEEEEEEEEDEE.

2 consecutive DNA-binding regions (HMG box) follow at residues 9–79 and 95–163; these read PRGK…KNYV and PKRP…AAYR. Cysteine sulfonic acid (-SO3H); alternate occurs at positions 23 and 45. C23 and C45 form a disulfide bridge. Residues 52–76 show a composition bias toward basic and acidic residues; that stretch reads MSSKEKGKFEEMAKGDKARYDREMK. The segment at 52-102 is disordered; it reads MSSKEKGKFEEMAKGDKARYDREMKNYVPPKGEKKGKKKDPNAPKRPPSAF. The residue at position 106 (C106) is a Cysteine sulfonic acid (-SO3H). A compositionally biased stretch (basic and acidic residues) spans 162–172; the sequence is YRAKSKSDAGK. The disordered stretch occupies residues 162-207; that stretch reads YRAKSKSDAGKKGPGRPAGSKKKAEPEEEEEEEEDEEEEEEEEDEE. The span at 187 to 207 shows a compositional bias: acidic residues; that stretch reads PEEEEEEEEDEEEEEEEEDEE.

It belongs to the HMGB family. In terms of processing, reduction/oxidation of cysteine residues Cys-23, Cys-45 and Cys-106 and a possible intramolecular disulfide bond involving Cys-23 and Cys-45 give rise to different redox forms with specific functional activities in various cellular compartments: 1- fully reduced HMGB2 (HMGB2C23hC45hC106h), 2- disulfide HMGB2 (HMGB2C23-C45C106h) and 3- sulfonyl HMGB2 (HMGB2C23soC45soC106so).

It is found in the nucleus. It localises to the chromosome. The protein localises to the cytoplasm. Its subcellular location is the secreted. Its function is as follows. Multifunctional protein with various roles in different cellular compartments. May act in a redox sensitive manner. Associates with chromatin and binds DNA with a preference to non-canonical DNA structures such as single-stranded DNA. Can bent DNA and enhance DNA flexibility by looping thus providing a mechanism to promote activities on various gene promoters. Proposed to be involved in the innate immune response to nucleic acids by acting as a cytoplasmic promiscuous immunogenic DNA/RNA sensor. Involved in inflammatory response to antigenic stimulus coupled with pro-inflammatory activity. In Gallus gallus (Chicken), this protein is High mobility group protein B2 (HMGB2).